The following is a 201-amino-acid chain: Holliday junction branch migration complex subunit RuvA (201 aa).

The interval 1–63 (MIAFVSGTVA…EDSLTLYGFA (63 aa)) is domain I. The interval 64–139 (DDDERQVFEL…RLGEPIGAPA (76 aa)) is domain II. Positions 139-143 (AVGAP) are flexible linker. A domain III region spans residues 144 to 201 (VSTGWRDQLHAALIGLGYATREADEAVSAVAPQAEAAGGTPQVGALLKAALQTLNRAR).

Belongs to the RuvA family. As to quaternary structure, homotetramer. Forms an RuvA(8)-RuvB(12)-Holliday junction (HJ) complex. HJ DNA is sandwiched between 2 RuvA tetramers; dsDNA enters through RuvA and exits via RuvB. An RuvB hexamer assembles on each DNA strand where it exits the tetramer. Each RuvB hexamer is contacted by two RuvA subunits (via domain III) on 2 adjacent RuvB subunits; this complex drives branch migration. In the full resolvosome a probable DNA-RuvA(4)-RuvB(12)-RuvC(2) complex forms which resolves the HJ.

It localises to the cytoplasm. The RuvA-RuvB-RuvC complex processes Holliday junction (HJ) DNA during genetic recombination and DNA repair, while the RuvA-RuvB complex plays an important role in the rescue of blocked DNA replication forks via replication fork reversal (RFR). RuvA specifically binds to HJ cruciform DNA, conferring on it an open structure. The RuvB hexamer acts as an ATP-dependent pump, pulling dsDNA into and through the RuvAB complex. HJ branch migration allows RuvC to scan DNA until it finds its consensus sequence, where it cleaves and resolves the cruciform DNA. This chain is Holliday junction branch migration complex subunit RuvA, found in Streptomyces coelicolor (strain ATCC BAA-471 / A3(2) / M145).